The following is a 294-amino-acid chain: Segregation and condensation protein A (294 aa).

Belongs to the ScpA family. As to quaternary structure, component of a cohesin-like complex composed of ScpA, ScpB and the Smc homodimer, in which ScpA and ScpB bind to the head domain of Smc. The presence of the three proteins is required for the association of the complex with DNA.

The protein resides in the cytoplasm. Functionally, participates in chromosomal partition during cell division. May act via the formation of a condensin-like complex containing Smc and ScpB that pull DNA away from mid-cell into both cell halves. The sequence is that of Segregation and condensation protein A from Ureaplasma parvum serovar 3 (strain ATCC 700970).